Here is a 480-residue protein sequence, read N- to C-terminus: DnaJ homolog subfamily A member 3, mitochondrial (480 aa).

R58 is subject to Omega-N-methylarginine; by CARM1. Residues 93-158 enclose the J domain; it reads DYYQILGVPR…VKRKQYDAYG (66 aa). K134 is subject to N6-acetyllysine. The CR-type zinc finger occupies 223–301; it reads GVNKEFTVNI…CRGAGQAKQK (79 aa). Residue C236 participates in Zn(2+) binding. CXXCXGXG motif repeat units lie at residues 236-243, 253-260, 275-282, and 289-296; these read CERCNGKG, CHYCGGSG, CRRCGGRG, and CVVCRGAG. Omega-N-methylarginine; by CARM1 is present on R238. Zn(2+) contacts are provided by C239, C253, C256, C275, C278, C289, and C292. At R293 the chain carries Omega-N-methylarginine; by CARM1. Residue S398 is modified to Phosphoserine. A compositionally biased stretch (polar residues) spans 443–456; that stretch reads LTSSGGSTMDSSAG. The interval 443–471 is disordered; sequence LTSSGGSTMDSSAGSKARREAGEDEEGFL.

In terms of assembly, interacts with JAK2, HSPA9B and IFN-gammaR2 chain. Interacts with Ras GTPase-activating protein 1 (RASA1). Isoform 2 interacts with MUSK (via the cytoplasmic domain). In terms of processing, tyrosine phosphorylated. As to expression, widely expressed with highest levels in heart, liver, lung and skeletal muscles. Also expressed in keratinocytes; expression level and distribution is altered in basal cell carcinomas.

It localises to the mitochondrion matrix. The protein localises to the cytoplasm. It is found in the cytosol. The protein resides in the postsynaptic cell membrane. Functionally, modulates apoptotic signal transduction or effector structures within the mitochondrial matrix. Affect cytochrome C release from the mitochondria and caspase 3 activation, but not caspase 8 activation. Isoform 1 increases apoptosis triggered by both TNF and the DNA-damaging agent mytomycin C; in sharp contrast, isoform 2 suppresses apoptosis. Can modulate IFN-gamma-mediated transcriptional activity. Isoform 2 may play a role in neuromuscular junction development as an effector of the MUSK signaling pathway. This Homo sapiens (Human) protein is DnaJ homolog subfamily A member 3, mitochondrial (DNAJA3).